Reading from the N-terminus, the 547-residue chain is Chaperonin GroEL (547 aa).

Residues 30–33 (TLGP), Lys51, 87–91 (DGTTT), Gly415, 479–481 (NAA), and Asp495 contribute to the ATP site.

This sequence belongs to the chaperonin (HSP60) family. As to quaternary structure, forms a cylinder of 14 subunits composed of two heptameric rings stacked back-to-back. Interacts with the co-chaperonin GroES.

Its subcellular location is the cytoplasm. It carries out the reaction ATP + H2O + a folded polypeptide = ADP + phosphate + an unfolded polypeptide.. In terms of biological role, together with its co-chaperonin GroES, plays an essential role in assisting protein folding. The GroEL-GroES system forms a nano-cage that allows encapsulation of the non-native substrate proteins and provides a physical environment optimized to promote and accelerate protein folding. This is Chaperonin GroEL from Marinomonas sp. (strain MWYL1).